A 245-amino-acid polypeptide reads, in one-letter code: 8-amino-3,8-dideoxy-manno-octulosonate cytidylyltransferase (245 aa).

Belongs to the KdsB family.

It localises to the cytoplasm. The enzyme catalyses 8-amino-3,8-dideoxy-alpha-D-manno-octulosonate + CTP = CMP-8-amino-3,8-dideoxy-alpha-D-manno-oct-2-ulosonate + diphosphate. It functions in the pathway bacterial outer membrane biogenesis; lipopolysaccharide biosynthesis. In terms of biological role, activates KDO8N (a required 8-carbon sugar) for incorporation into bacterial lipopolysaccharide in the Shewanella genus. The sequence is that of 8-amino-3,8-dideoxy-manno-octulosonate cytidylyltransferase from Shewanella halifaxensis (strain HAW-EB4).